Here is a 155-residue protein sequence, read N- to C-terminus: Ribosome maturation factor RimP (155 aa).

It belongs to the RimP family.

The protein localises to the cytoplasm. In terms of biological role, required for maturation of 30S ribosomal subunits. In Synechococcus sp. (strain CC9605), this protein is Ribosome maturation factor RimP.